A 155-amino-acid polypeptide reads, in one-letter code: MPKFIEGNLDAKGLTFGIVVSRFNSFICERLLEGAIDALVRHGANETDITVARIPGAFEIPLAAKTMAASQKFDAVICLGAVIRGSTPHFEYVSSEVSKGVASVSLESGLPIAFGVLTTDTIEQAVERAGTKAGNKGFEAAVTAIETVNVIKAMK.

5-amino-6-(D-ribitylamino)uracil is bound by residues Phe23, 57 to 59, and 81 to 83; these read AFE and AVI. A (2S)-2-hydroxy-3-oxobutyl phosphate-binding site is contributed by 86–87; that stretch reads ST. His89 serves as the catalytic Proton donor. 5-amino-6-(D-ribitylamino)uracil is bound at residue Phe114. Arg128 lines the (2S)-2-hydroxy-3-oxobutyl phosphate pocket.

Belongs to the DMRL synthase family.

The enzyme catalyses (2S)-2-hydroxy-3-oxobutyl phosphate + 5-amino-6-(D-ribitylamino)uracil = 6,7-dimethyl-8-(1-D-ribityl)lumazine + phosphate + 2 H2O + H(+). It participates in cofactor biosynthesis; riboflavin biosynthesis; riboflavin from 2-hydroxy-3-oxobutyl phosphate and 5-amino-6-(D-ribitylamino)uracil: step 1/2. Catalyzes the formation of 6,7-dimethyl-8-ribityllumazine by condensation of 5-amino-6-(D-ribitylamino)uracil with 3,4-dihydroxy-2-butanone 4-phosphate. This is the penultimate step in the biosynthesis of riboflavin. The chain is 6,7-dimethyl-8-ribityllumazine synthase from Trichlorobacter lovleyi (strain ATCC BAA-1151 / DSM 17278 / SZ) (Geobacter lovleyi).